The sequence spans 320 residues: Protein phosphatase PTC7 homolog fig (320 aa).

The PPM-type phosphatase domain occupies 49-315 (PYLVTAVQGR…DDITLILASV (267 aa)). Mn(2+) is bound by residues D93, G94, and D238.

This sequence belongs to the PP2C family. It depends on Mg(2+) as a cofactor. Mn(2+) serves as cofactor.

The catalysed reaction is O-phospho-L-seryl-[protein] + H2O = L-seryl-[protein] + phosphate. It carries out the reaction O-phospho-L-threonyl-[protein] + H2O = L-threonyl-[protein] + phosphate. This is Protein phosphatase PTC7 homolog fig from Drosophila yakuba (Fruit fly).